The chain runs to 277 residues: 2-dehydro-3-deoxyphosphooctonate aldolase (277 aa).

This sequence belongs to the KdsA family.

The protein resides in the cytoplasm. The catalysed reaction is D-arabinose 5-phosphate + phosphoenolpyruvate + H2O = 3-deoxy-alpha-D-manno-2-octulosonate-8-phosphate + phosphate. It participates in carbohydrate biosynthesis; 3-deoxy-D-manno-octulosonate biosynthesis; 3-deoxy-D-manno-octulosonate from D-ribulose 5-phosphate: step 2/3. Its pathway is bacterial outer membrane biogenesis; lipopolysaccharide biosynthesis. The chain is 2-dehydro-3-deoxyphosphooctonate aldolase from Brucella abortus (strain S19).